The chain runs to 144 residues: Large ribosomal subunit protein uL15 (144 aa).

The tract at residues Met1–Gly53 is disordered. Residues Arg21–Gly31 show a composition bias toward gly residues.

The protein belongs to the universal ribosomal protein uL15 family. As to quaternary structure, part of the 50S ribosomal subunit.

Its function is as follows. Binds to the 23S rRNA. This Haemophilus influenzae (strain ATCC 51907 / DSM 11121 / KW20 / Rd) protein is Large ribosomal subunit protein uL15.